Here is a 939-residue protein sequence, read N- to C-terminus: Vacuolar membrane protease (939 aa).

Residues 1–11 are Cytoplasmic-facing; that stretch reads MGFNSIFKFRK. The chain crosses the membrane as a helical span at residues 12 to 32; sequence TSLSLLLFAVYFIIGILYFID. The Vacuolar portion of the chain corresponds to 33–356; it reads KTRYKHSLPI…TFVAIPSTKL (324 aa). 3 N-linked (GlcNAc...) asparagine glycosylation sites follow: Asn59, Asn88, and Asn114. Zn(2+)-binding residues include His149 and Asp161. The active-site Proton acceptor is Glu193. Residues Glu194, Glu219, and His293 each coordinate Zn(2+). Asn326 carries N-linked (GlcNAc...) asparagine glycosylation. The chain crosses the membrane as a helical span at residues 357–377; it reads FWINIALLIIMPIISIFLFSI. Over 378–388 the chain is Cytoplasmic; that stretch reads VKKYNNEIIDS. A helical membrane pass occupies residues 389–409; the sequence is GNIWWRLPISAMSSGTIIIFT. The Vacuolar portion of the chain corresponds to 410–424; sequence TKLIMKWNPYILSRN. A helical membrane pass occupies residues 425–445; sequence FLLPLIGLTFEFIILNSYILT. Residues 446–453 are Cytoplasmic-facing; it reads MFENLSSS. A helical transmembrane segment spans residues 454 to 474; it reads FDFKTIAINEISFLFWIVLAY. Over 475–491 the chain is Vacuolar; that stretch reads QTWKLYDNNYQNTGIYP. A helical transmembrane segment spans residues 492–512; sequence FTICYIVMATAGNIGYLFLIF. Topologically, residues 513–588 are cytoplasmic; sequence KNIEIVEDEE…NQRTILKESK (76 aa). Residues 540–552 show a composition bias toward basic and acidic residues; sequence YRDEINGRDDSSR. Positions 540–561 are disordered; the sequence is YRDEINGRDDSSRDSNSASIPT. Residues 589–609 form a helical membrane-spanning segment; that stretch reads LVYNYDWIIEFLLVVPFSTFL. At 610–636 the chain is on the vacuolar side; sequence LYNSLELIMDAVNQTIQETGDLYKVYK. Residue Asn622 is glycosylated (N-linked (GlcNAc...) asparagine). The chain crosses the membrane as a helical span at residues 637 to 657; sequence ILAIGSILISIPTLPFAYKIG. Topologically, residues 658–663 are cytoplasmic; it reads CQLGKT. Residues 664 to 684 form a helical membrane-spanning segment; that stretch reads LTFISIGCLLISMALAPFTEM. Topologically, residues 685-939 are vacuolar; the sequence is NPIKFRFMQV…LVKLTEAMVL (255 aa). Asn810 and Asn820 each carry an N-linked (GlcNAc...) asparagine glycan.

The protein belongs to the peptidase M28 family. Zn(2+) is required as a cofactor.

It is found in the vacuole membrane. May be involved in vacuolar sorting and osmoregulation. The sequence is that of Vacuolar membrane protease from Vanderwaltozyma polyspora (strain ATCC 22028 / DSM 70294 / BCRC 21397 / CBS 2163 / NBRC 10782 / NRRL Y-8283 / UCD 57-17) (Kluyveromyces polysporus).